Reading from the N-terminus, the 396-residue chain is Elongation factor Tu (396 aa).

The 197-residue stretch at 10 to 206 (KPHCNIGTIG…AVDAYIPQPE (197 aa)) folds into the tr-type G domain. The tract at residues 19–26 (GHVDHGKT) is G1. Residue 19 to 26 (GHVDHGKT) coordinates GTP. Residue T26 participates in Mg(2+) binding. The segment at 60-64 (GITIS) is G2. Positions 81-84 (DCPG) are G3. GTP-binding positions include 81-85 (DCPGH) and 136-139 (NKCD). The segment at 136-139 (NKCD) is G4. The interval 174–176 (SAL) is G5.

Belongs to the TRAFAC class translation factor GTPase superfamily. Classic translation factor GTPase family. EF-Tu/EF-1A subfamily. As to quaternary structure, monomer.

It localises to the cytoplasm. The enzyme catalyses GTP + H2O = GDP + phosphate + H(+). GTP hydrolase that promotes the GTP-dependent binding of aminoacyl-tRNA to the A-site of ribosomes during protein biosynthesis. The chain is Elongation factor Tu from Rhodopseudomonas palustris (strain BisB18).